The sequence spans 179 residues: Protein GrpE (179 aa).

Residues 1-45 are disordered; that stretch reads MSEEKLTQDPTAEEEQTETADQQESADVNWEQEAAHWKAQAEEHQ. Residues 33-45 are compositionally biased toward basic and acidic residues; the sequence is EAAHWKAQAEEHQ.

This sequence belongs to the GrpE family. In terms of assembly, homodimer.

The protein localises to the cytoplasm. Its function is as follows. Participates actively in the response to hyperosmotic and heat shock by preventing the aggregation of stress-denatured proteins, in association with DnaK and GrpE. It is the nucleotide exchange factor for DnaK and may function as a thermosensor. Unfolded proteins bind initially to DnaJ; upon interaction with the DnaJ-bound protein, DnaK hydrolyzes its bound ATP, resulting in the formation of a stable complex. GrpE releases ADP from DnaK; ATP binding to DnaK triggers the release of the substrate protein, thus completing the reaction cycle. Several rounds of ATP-dependent interactions between DnaJ, DnaK and GrpE are required for fully efficient folding. This Brevibacillus choshinensis protein is Protein GrpE.